Reading from the N-terminus, the 163-residue chain is Phosphopantetheine adenylyltransferase (163 aa).

Serine 10 serves as a coordination point for substrate. ATP is bound by residues 10-11 (SF) and histidine 18. Residues lysine 42, leucine 74, and arginine 88 each coordinate substrate. ATP-binding positions include 89 to 91 (GLR), glutamate 99, and 124 to 130 (YSFLSSS).

It belongs to the bacterial CoaD family. As to quaternary structure, homohexamer. The cofactor is Mg(2+).

Its subcellular location is the cytoplasm. The enzyme catalyses (R)-4'-phosphopantetheine + ATP + H(+) = 3'-dephospho-CoA + diphosphate. It participates in cofactor biosynthesis; coenzyme A biosynthesis; CoA from (R)-pantothenate: step 4/5. Its function is as follows. Reversibly transfers an adenylyl group from ATP to 4'-phosphopantetheine, yielding dephospho-CoA (dPCoA) and pyrophosphate. The polypeptide is Phosphopantetheine adenylyltransferase (Bacillus cereus (strain G9842)).